A 345-amino-acid chain; its full sequence is UDP-3-O-acylglucosamine N-acyltransferase (345 aa).

The active-site Proton acceptor is histidine 253.

Belongs to the transferase hexapeptide repeat family. LpxD subfamily. As to quaternary structure, homotrimer.

The catalysed reaction is a UDP-3-O-[(3R)-3-hydroxyacyl]-alpha-D-glucosamine + a (3R)-hydroxyacyl-[ACP] = a UDP-2-N,3-O-bis[(3R)-3-hydroxyacyl]-alpha-D-glucosamine + holo-[ACP] + H(+). It functions in the pathway bacterial outer membrane biogenesis; LPS lipid A biosynthesis. Its function is as follows. Catalyzes the N-acylation of UDP-3-O-acylglucosamine using 3-hydroxyacyl-ACP as the acyl donor. Is involved in the biosynthesis of lipid A, a phosphorylated glycolipid that anchors the lipopolysaccharide to the outer membrane of the cell. The polypeptide is UDP-3-O-acylglucosamine N-acyltransferase (Rickettsia massiliae (strain Mtu5)).